A 263-amino-acid polypeptide reads, in one-letter code: UPF0246 protein Mmar10_0828 (263 aa).

Belongs to the UPF0246 family.

The sequence is that of UPF0246 protein Mmar10_0828 from Maricaulis maris (strain MCS10) (Caulobacter maris).